The chain runs to 1168 residues: Homeodomain-interacting protein kinase 2 (1168 aa).

Ser16 is subject to Phosphoserine. A Glycyl lysine isopeptide (Lys-Gly) (interchain with G-Cter in SUMO); alternate cross-link involves residue Lys32. Residue Lys32 forms a Glycyl lysine isopeptide (Lys-Gly) (interchain with G-Cter in SUMO2); alternate linkage. Residues 97-230 form a transcriptional corepression region; the sequence is SASSTSVTGQ…TNEIVAIKIL (134 aa). Ser118 and Ser135 each carry phosphoserine. Position 141 is a phosphothreonine (Thr141). The interval 189 to 520 is interaction with DAXX; that stretch reads HEVLCSMTNT…DADKRITPIE (332 aa). One can recognise a Protein kinase domain in the interval 199–527; it reads YEVLEFLGRG…PIETLNHPFV (329 aa). ATP is bound by residues 205–213 and Lys228; that span reads LGRGTFGQV. A phosphothreonine mark is found at Thr252 and Thr273. The active-site Proton acceptor is the Asp324. Tyr361 carries the phosphotyrosine modification. Ser441 is subject to Phosphoserine. 3 positions are modified to phosphothreonine: Thr482, Thr517, and Thr566. The segment at 539 to 816 is interaction with SKI and SMAD1; sequence THVKSCFQNM…KENTPPRCAM (278 aa). The interval 595–772 is interaction with DAZAP2; it reads PSAASMAAVA…MRQQPTSTTS (178 aa). 2 positions are modified to phosphoserine: Ser607 and Ser641. Phosphothreonine is present on Thr660. Positions 724 to 869 are interaction with POU4F1; sequence RNTHAHGSHY…ITISSDTDEE (146 aa). The tract at residues 746–848 is interaction with CTBP1; sequence HVTLPAAQPL…TRERQRQTIV (103 aa). The interaction with HMGA1 stretch occupies residues 759–869; it reads VAHVMRQQPT…ITISSDTDEE (111 aa). Residues 764 to 820 are disordered; the sequence is RQQPTSTTSSRKSKQHQPSMRNVSTCEVTSSQSTSSPQRSKRVKENTPPRCAMVHSS. Residues 765-791 are compositionally biased toward polar residues; sequence QQPTSTTSSRKSKQHQPSMRNVSTCEV. Residues 774–777 carry the Nuclear localization signal 1 (NLS1) motif; the sequence is RKSK. A phosphoserine mark is found at Ser787 and Ser799. Positions 792 to 801 are enriched in low complexity; that stretch reads TSSQSTSSPQ. Positions 804 to 807 match the Nuclear localization signal 2 (NLS2) motif; it reads KRVK. The segment at 812-907 is interaction with TP53 and TP73; it reads PRCAMVHSSP…YSDSSSNTSP (96 aa). The segment at 845-879 is interaction with UBE2I; sequence QTIVIPDTPSPTVSVITISSDTDEEEEQKHAPTST. Residues 845–952 are localization to nuclear speckles; it reads QTIVIPDTPS…PLKTQASEVL (108 aa). The segment at 845 to 952 is required for localization to nuclear speckles; the sequence is QTIVIPDTPS…PLKTQASEVL (108 aa). An interaction with UBL1 region spans residues 854–876; sequence SPTVSVITISSDTDEEEEQKHAP. Positions 856 to 880 are SUMO interaction motifs (SIM); required for nuclear localization and kinase activity; the sequence is TVSVITISSDTDEEEEQKHAPTSTV. The segment at 894 to 936 is disordered; that stretch reads HDSPYSDSSSNTSPYSVQQRTGHNGTNTLDTKGALENHCTGNP. Residues 895-909 are compositionally biased toward low complexity; it reads DSPYSDSSSNTSPYS. The residue at position 906 (Ser906) is a Phosphoserine. An interaction with AXIN1 region spans residues 907-1022; that stretch reads PYSVQQRTGH…LSQAQPHMAT (116 aa). Residues 910-923 are compositionally biased toward polar residues; sequence VQQRTGHNGTNTLD. Glycyl lysine isopeptide (Lys-Gly) (interchain with G-Cter in SUMO2) cross-links involve residues Lys925 and Lys945. The segment at 956-1168 is autoinhibitory domain (AID); it reads DSLGPAVSTG…PAKVNQYPYI (213 aa). Residues 960–1030 are disordered; sequence PAVSTGHHSS…ATDRTGSHRR (71 aa). Ser963 carries the phosphoserine modification. 2 stretches are compositionally biased toward low complexity: residues 965 to 991 and 998 to 1018; these read GHHS…GSSS and QQRP…QAQP. Residues Ser1014, Ser1125, and Ser1158 each carry the phosphoserine modification. Lys1161 participates in a covalent cross-link: Glycyl lysine isopeptide (Lys-Gly) (interchain with G-Cter in SUMO).

It belongs to the protein kinase superfamily. CMGC Ser/Thr protein kinase family. HIPK subfamily. In terms of assembly, interacts with CREB1, SIAH1, WSB1, CBX4, TRADD, p53/TP53, TP73, TP63, CREBBP, DAXX, P53DINP1, SKI, SMAD1, SMAD2 and SMAD3, but not SMAD4. Interacts with ATF1, PML, RUNX1, EP300, NKX1-2, NKX2-5, UBE2I, HMGA1, CTBP1, AXIN1, NLK, MYB, POU4F1, POU4F2, POU4F3, UBE2I, UBL1 and ZBTB4. Probably part of a complex consisting of p53/TP53, HIPK2 and AXIN1. Interacts with SP100; positively regulates TP53-dependent transcription. Interacts with DAZAP2; the interaction results in phosphorylation of DAZAP2 which causes localization of DAZAP2 to the nucleus, reduces interaction of DAZAP2 with HIPK2 and prevents DAZAP2-dependent degradation of HIPK2. Interacts with SIAH1; the interaction is promoted by DAZAP2 and results in SIAH1-mediated ubiquitination and subsequent proteasomal degradation of HIPK2. Post-translationally, autophosphorylation at Tyr-361 in the activation loop activates the kinase and promotes nuclear localization. In terms of processing, sumoylated. When conjugated it is directed to nuclear speckles. Desumoylated by SENP1. Sumoylation on Lys-32 is promoted by the E3 SUMO-protein ligase CBX4. Ubiquitinated by FBXO3, WSB1 and SIAH1, leading to rapid proteasome-dependent degradation. The degradation mediated by FBXO3, but not ubiquitination, is prevented in the presence of PML. The degradation mediated by WSB1 and SIAH1 is reversibly reduced upon DNA damage. Post-translationally, cleaved at Asp-895 and Asp-956 by CASP6 in a p53/TP53-dependent manner. The cleaved form lacks the autoinhibitory C-terminal domain (AID), resulting in a hyperactive kinase, which potentiates p53/TP53 Ser-46 phosphorylation and subsequent activation of the cell death machinery.

Its subcellular location is the nucleus. The protein localises to the PML body. The protein resides in the cytoplasm. The catalysed reaction is L-seryl-[protein] + ATP = O-phospho-L-seryl-[protein] + ADP + H(+). It carries out the reaction L-threonyl-[protein] + ATP = O-phospho-L-threonyl-[protein] + ADP + H(+). Its function is as follows. Serine/threonine-protein kinase involved in transcription regulation, p53/TP53-mediated cellular apoptosis and regulation of the cell cycle. Acts as a corepressor of several transcription factors, including SMAD1 and POU4F1/Brn3a and probably NK homeodomain transcription factors. Phosphorylates PDX1, ATF1, PML, p53/TP53, CREB1, CTBP1, CBX4, RUNX1, EP300, CTNNB1, HMGA1, ZBTB4 and DAZAP2. Inhibits cell growth and promotes apoptosis through the activation of p53/TP53 both at the transcription level and at the protein level (by phosphorylation and indirect acetylation). The phosphorylation of p53/TP53 may be mediated by a p53/TP53-HIPK2-AXIN1 complex. Involved in the response to hypoxia by acting as a transcriptional co-suppressor of HIF1A. Mediates transcriptional activation of TP73. In response to TGFB, cooperates with DAXX to activate JNK. Negative regulator through phosphorylation and subsequent proteasomal degradation of CTNNB1 and the antiapoptotic factor CTBP1. In the Wnt/beta-catenin signaling pathway acts as an intermediate kinase between MAP3K7/TAK1 and NLK to promote the proteasomal degradation of MYB. Phosphorylates CBX4 upon DNA damage and promotes its E3 SUMO-protein ligase activity. Activates CREB1 and ATF1 transcription factors by phosphorylation in response to genotoxic stress. In response to DNA damage, stabilizes PML by phosphorylation. PML, HIPK2 and FBXO3 may act synergically to activate p53/TP53-dependent transactivation. Promotes angiogenesis, and is involved in erythroid differentiation, especially during fetal liver erythropoiesis. Phosphorylation of RUNX1 and EP300 stimulates EP300 transcription regulation activity. Triggers ZBTB4 protein degradation in response to DNA damage. In response to DNA damage, phosphorylates DAZAP2 which localizes DAZAP2 to the nucleus, reduces interaction of DAZAP2 with HIPK2 and prevents DAZAP2-dependent ubiquitination of HIPK2 by E3 ubiquitin-protein ligase SIAH1 and subsequent proteasomal degradation. Modulates HMGA1 DNA-binding affinity. In response to high glucose, triggers phosphorylation-mediated subnuclear localization shifting of PDX1. Involved in the regulation of eye size, lens formation and retinal lamination during late embryogenesis. In Mesocricetus auratus (Golden hamster), this protein is Homeodomain-interacting protein kinase 2 (Hipk2).